A 212-amino-acid chain; its full sequence is MMNTPFDPTNALVPMVVEQTAKGERSYDIYSRLLKENVIFMVGQVEDHMANLIVAQMLFLEAENPEKDIFLYINSPGGSVTAGMAIYDTMNFIKPDVSTVCIGQAASMGAFLLSGGAKGKRYCLPNARVMIHQPLGGFQGQASDFEIHAKEILSIKEKMNRLMAAHTGQDYDKVARDTDRDNFLSAQESVDYGLVDQVLANRPDASNSDAKK.

Catalysis depends on serine 107, which acts as the Nucleophile. Histidine 132 is a catalytic residue.

The protein belongs to the peptidase S14 family. In terms of assembly, fourteen ClpP subunits assemble into 2 heptameric rings which stack back to back to give a disk-like structure with a central cavity, resembling the structure of eukaryotic proteasomes.

Its subcellular location is the cytoplasm. It carries out the reaction Hydrolysis of proteins to small peptides in the presence of ATP and magnesium. alpha-casein is the usual test substrate. In the absence of ATP, only oligopeptides shorter than five residues are hydrolyzed (such as succinyl-Leu-Tyr-|-NHMec, and Leu-Tyr-Leu-|-Tyr-Trp, in which cleavage of the -Tyr-|-Leu- and -Tyr-|-Trp bonds also occurs).. Cleaves peptides in various proteins in a process that requires ATP hydrolysis. Has a chymotrypsin-like activity. Plays a major role in the degradation of misfolded proteins. This is ATP-dependent Clp protease proteolytic subunit from Pseudoalteromonas atlantica (strain T6c / ATCC BAA-1087).